The following is a 525-amino-acid chain: Light-independent protochlorophyllide reductase subunit B (525 aa).

D36 is a binding site for [4Fe-4S] cluster. The Proton donor role is filled by D290. Position 425 to 426 (425 to 426 (GL)) interacts with substrate.

It belongs to the ChlB/BchB/BchZ family. As to quaternary structure, protochlorophyllide reductase is composed of three subunits; ChlL, ChlN and ChlB. Forms a heterotetramer of two ChlB and two ChlN subunits. The cofactor is [4Fe-4S] cluster.

The catalysed reaction is chlorophyllide a + oxidized 2[4Fe-4S]-[ferredoxin] + 2 ADP + 2 phosphate = protochlorophyllide a + reduced 2[4Fe-4S]-[ferredoxin] + 2 ATP + 2 H2O. It functions in the pathway porphyrin-containing compound metabolism; chlorophyll biosynthesis (light-independent). In terms of biological role, component of the dark-operative protochlorophyllide reductase (DPOR) that uses Mg-ATP and reduced ferredoxin to reduce ring D of protochlorophyllide (Pchlide) to form chlorophyllide a (Chlide). This reaction is light-independent. The NB-protein (ChlN-ChlB) is the catalytic component of the complex. The polypeptide is Light-independent protochlorophyllide reductase subunit B (Prochlorococcus marinus (strain MIT 9312)).